The following is a 294-amino-acid chain: MKMWFRLATFVTLIIEFAHCQLGAGLTSALTGNTGNAAHAGNSGNMATSMAMAAAMGSDFAALGPLGAKLFSGAGMSPAVAYKMFDGSVADFQKYKAKMNLMKRLNAGGSGGIAGGGGGGATGGLGALAMGKLALFTGGGMDPVVAYKMFDGSVSDFQKYKMKKKLAAAAGAGGGMGIGTLAMMDGSMADMAKFNMLSKVLSPPTGSQTGAAANGTSAGAAVRGGSSPLRRIANMRMTRKLCEDTPVVYRMRRCSPQLPCRHALTTCKQTLRYGSVCCAKNLYAAAMFENMPGF.

The N-terminal stretch at 1 to 20 (MKMWFRLATFVTLIIEFAHC) is a signal peptide. Residues 205–221 (TGSQTGAAANGTSAGAA) show a composition bias toward low complexity. A disordered region spans residues 205–225 (TGSQTGAAANGTSAGAAVRGG).

In terms of tissue distribution, nacreous layer of shell (at protein level). Expressed primarily in the mantle with highest level in the mantle pallium and lower level in the mantle edge.

It is found in the secreted. The chain is Glycine-rich protein 2 from Pinctada maxima (Silver-lipped pearl oyster).